The primary structure comprises 256 residues: Triosephosphate isomerase (256 aa).

A substrate-binding site is contributed by 9-11; sequence NWK. His96 acts as the Electrophile in catalysis. Glu168 (proton acceptor) is an active-site residue. Substrate-binding positions include Ser213 and 234 to 235; that span reads GG.

The protein belongs to the triosephosphate isomerase family. As to quaternary structure, homodimer.

Its subcellular location is the cytoplasm. It carries out the reaction D-glyceraldehyde 3-phosphate = dihydroxyacetone phosphate. It functions in the pathway carbohydrate biosynthesis; gluconeogenesis. Its pathway is carbohydrate degradation; glycolysis; D-glyceraldehyde 3-phosphate from glycerone phosphate: step 1/1. Functionally, involved in the gluconeogenesis. Catalyzes stereospecifically the conversion of dihydroxyacetone phosphate (DHAP) to D-glyceraldehyde-3-phosphate (G3P). In Baumannia cicadellinicola subsp. Homalodisca coagulata, this protein is Triosephosphate isomerase.